The primary structure comprises 541 residues: Glucose-6-phosphate isomerase (541 aa).

Glutamate 346 acts as the Proton donor in catalysis. Residues histidine 377 and lysine 506 contribute to the active site.

This sequence belongs to the GPI family.

The protein localises to the cytoplasm. The enzyme catalyses alpha-D-glucose 6-phosphate = beta-D-fructose 6-phosphate. It functions in the pathway carbohydrate biosynthesis; gluconeogenesis. Its pathway is carbohydrate degradation; glycolysis; D-glyceraldehyde 3-phosphate and glycerone phosphate from D-glucose: step 2/4. Its function is as follows. Catalyzes the reversible isomerization of glucose-6-phosphate to fructose-6-phosphate. The protein is Glucose-6-phosphate isomerase of Agrobacterium fabrum (strain C58 / ATCC 33970) (Agrobacterium tumefaciens (strain C58)).